A 225-amino-acid chain; its full sequence is E3 ubiquitin-protein ligase ATL59 (225 aa).

The helical transmembrane segment at 22–42 (FTFIVCVPICVILIVLLVLYI) threads the bilayer. An RING-type; atypical zinc finger spans residues 97–139 (CSVCLGDYQAEEKLQQMPSCGHTFHMECIDLWLTSHTTCPLCR).

It belongs to the RING-type zinc finger family. ATL subfamily.

The protein localises to the membrane. The enzyme catalyses S-ubiquitinyl-[E2 ubiquitin-conjugating enzyme]-L-cysteine + [acceptor protein]-L-lysine = [E2 ubiquitin-conjugating enzyme]-L-cysteine + N(6)-ubiquitinyl-[acceptor protein]-L-lysine.. Its pathway is protein modification; protein ubiquitination. In terms of biological role, E3 ubiquitin-protein ligase able to catalyze polyubiquitination with ubiquitin-conjugating enzyme E2 UBC8, UBC10, UBC11, and UBC34 in vitro. This chain is E3 ubiquitin-protein ligase ATL59 (ATL59), found in Arabidopsis thaliana (Mouse-ear cress).